A 468-amino-acid chain; its full sequence is UDP-N-acetylmuramate--L-alanine ligase (468 aa).

Position 121–127 (121–127) interacts with ATP; sequence GSHGKTT.

This sequence belongs to the MurCDEF family.

The protein localises to the cytoplasm. It catalyses the reaction UDP-N-acetyl-alpha-D-muramate + L-alanine + ATP = UDP-N-acetyl-alpha-D-muramoyl-L-alanine + ADP + phosphate + H(+). It participates in cell wall biogenesis; peptidoglycan biosynthesis. In terms of biological role, cell wall formation. The sequence is that of UDP-N-acetylmuramate--L-alanine ligase from Borreliella afzelii (strain PKo) (Borrelia afzelii).